Here is a 423-residue protein sequence, read N- to C-terminus: Cytidylate cyclase (423 aa).

The Guanylate cyclase domain occupies 79 to 184; that stretch reads CSLFVDISGS…LKIRIGIDFG (106 aa). Residue Phe-82 coordinates a ribonucleoside 5'-triphosphate. Positions 84, 85, and 128 each coordinate Mn(2+). The interval 290-409 is AGS-C domain; the sequence is ENEQFYSPRD…ICHDSFGLFI (120 aa).

It belongs to the adenylyl cyclase class-4/guanylyl cyclase family. Pyrimidine cyclase subfamily. As to quaternary structure, homodimer. Mn(2+) is required as a cofactor.

The protein resides in the cytoplasm. The catalysed reaction is CTP = 3',5'-cyclic CMP + diphosphate. Functionally, pycsar (pyrimidine cyclase system for antiphage resistance) provides immunity against bacteriophage. The pyrimidine cyclase (PycC) synthesizes cyclic nucleotides in response to infection; these serve as specific second messenger signals. The signal activates the adjacent effector, leading to bacterial cell death and abortive phage infection. A clade E Pycsar system. The pyrimidine cyclase gene of a two-gene Pycsar system, weakly generates cyclic CMP (cCMP) from CTP, has little to no activity on ATP, GTP or UTP. Expression of this and adjacent effector SaPycTM (AC P0DV39) probably confers resistance to bacteriophage. The genes are probably only expressed in response to bacteriophage infection. The polypeptide is Cytidylate cyclase (Staphylococcus aureus).